The primary structure comprises 89 residues: UPF0367 protein P9515_01381 (89 aa).

The protein belongs to the UPF0367 family.

In Prochlorococcus marinus (strain MIT 9515), this protein is UPF0367 protein P9515_01381.